Reading from the N-terminus, the 121-residue chain is Parathyroid hormone 4 (121 aa).

The signal sequence occupies residues 1 to 24 (MLKMQRSQQRVALMMLMVVAAVHC). A propeptide spanning residues 25–29 (QESES) is cleaved from the precursor. Residues 77 to 97 (RSRGAQLYSQPGREESSGGQK) form a disordered region.

The protein belongs to the parathyroid hormone family. Specifically expressed in a bilateral cluster of neurons in the dorsal region of the periventricular hypothalamus. Their axons project through the midbrain and hindbrain and down the spinal cord.

It is found in the secreted. Its function is as follows. Neuroendocrine peptide which is produced by a subset of neurons in the hypothalamus. Activates the G-protein coupled receptors pth1ra, pth1rb and pth2r with similar affinity. Receptor binding stimulates intracellular cAMP production. Plays a role in bone mineralization by regulating expression of factors involved in phosphate homeostasis. Important for embryonic bone development. This is Parathyroid hormone 4 from Danio rerio (Zebrafish).